Reading from the N-terminus, the 351-residue chain is Renin receptor (351 aa).

A signal peptide spans 1-17 (MAVLVVFLSFLVADVFG). The Extracellular portion of the chain corresponds to 18–303 (NEFSILRSPG…YNLAYKYNFE (286 aa)). A helical membrane pass occupies residues 304 to 324 (YPVVFNLVLWIMIGLALTLIV). The Cytoplasmic segment spans residues 325–351 (TCYNIWNMDPGYDSIIYRMTNQKIRMD). Positions 347–351 (KIRMD) match the Mediates retrograde transport to the ER motif.

In terms of assembly, interacts with renin. Accessory component of the multisubunit proton-transporting vacuolar (V)-ATPase protein pump. Interacts (via N-terminus) with ATP6AP1 (via N-terminus). Interacts with ATP6V0D1; ATP6V0D1 is a V-ATPase complex subunit and the interaction promotes V-ATPase complex assembly. Interacts with TMEM9; TMEM9 is a V-ATPase assembly regulator and the interaction induces the interaction with ATP6V0D1. Interacts with VMA21 (via N-terminus); VMA21 is a V-ATPase accessory component. In terms of processing, phosphorylated. Post-translationally, proteolytically cleaved by a furin-like convertase in the trans-Golgi network to generate N- and C-terminal fragments. As to expression, expressed in the brain.

Its subcellular location is the endoplasmic reticulum membrane. The protein localises to the lysosome membrane. It localises to the cytoplasmic vesicle. It is found in the autophagosome membrane. The protein resides in the cell projection. Its subcellular location is the dendritic spine membrane. The protein localises to the axon. It localises to the endosome membrane. It is found in the clathrin-coated vesicle membrane. The protein resides in the secretory vesicle. Its subcellular location is the synaptic vesicle membrane. Its function is as follows. Multifunctional protein which functions as a renin, prorenin cellular receptor and is involved in the assembly of the lysosomal proton-transporting V-type ATPase (V-ATPase) and the acidification of the endo-lysosomal system. May mediate renin-dependent cellular responses by activating ERK1 and ERK2. By increasing the catalytic efficiency of renin in AGT/angiotensinogen conversion to angiotensin I, may also play a role in the renin-angiotensin system (RAS). Through its function in V-type ATPase (v-ATPase) assembly and acidification of the lysosome it regulates protein degradation and may control different signaling pathways important for proper brain development, synapse morphology and synaptic transmission. This chain is Renin receptor (ATP6AP2), found in Bos taurus (Bovine).